The following is a 396-amino-acid chain: MFLKAVVLTLALVAVAGARAEVSADQVATVMWDYFSQLSNNAKEAVEHLQKSELTQQLNALFQDKLGEVNTYAGDLQKKLVPFATELHERLAKDSEKLKEEIGKELEELRARLLPHANEVSQKIGDNLRELQQRLEPYADQLRTQVSTQAEQLRRQLTPYAQRMERVLRENADSLQASLRPHADELKAKIDQNVEELKGRLTPYADEFKVKIDQTVEELRRSLAPYAQDTQEKLNHQLEGLTFQMKKNAEELKARISASAEELRQRLAPLAEDVRGNLRGNTEGLQKSLAELGGHLDQQVEEFRRRVEPYGENFNKALVQQMEQLRQKLGPHAGDVEGHLSFLEKDLRDKVNSFFSTFKEKESQDKTLSLPELEQQQEQQQEQQQEQVQMLAPLES.

The signal sequence occupies residues 1–20 (MFLKAVVLTLALVAVAGARA). Tandem repeats lie at residues 33–54 (DYFSQLSNNAKEAVEHLQKSEL), 60–81 (ALFQDKLGEVNTYAGDLQKKLV), 82–103 (PFATELHERLAKDSEKLKEEIG), 115–136 (PHANEVSQKIGDNLRELQQRLE), 137–158 (PYADQLRTQVSTQAEQLRRQLT), 159–180 (PYAQRMERVLRENADSLQASLR), 181–202 (PHADELKAKIDQNVEELKGRLT), 203–224 (PYADEFKVKIDQTVEELRRSLA), 225–246 (PYAQDTQEKLNHQLEGLTFQMK), 247–268 (KNAEELKARISASAEELRQRLA), 269–286 (PLAEDVRGNLRGNTEGLQ), 287–308 (KSLAELGGHLDQQVEEFRRRVE), and 309–330 (PYGENFNKALVQQMEQLRQKLG). Residues 33 to 330 (DYFSQLSNNA…QMEQLRQKLG (298 aa)) are 13 X 22 AA approximate tandem repeats. The tract at residues 361–396 (KESQDKTLSLPELEQQQEQQQEQQQEQVQMLAPLES) is disordered. A compositionally biased stretch (low complexity) spans 374–389 (EQQQEQQQEQQQEQVQ).

The protein belongs to the apolipoprotein A1/A4/E family. In terms of assembly, homodimer. In terms of processing, phosphorylation sites are present in the extracellular medium. Synthesized primarily in the intestine and secreted in plasma.

It is found in the secreted. May have a role in chylomicrons and VLDL secretion and catabolism. Required for efficient activation of lipoprotein lipase by ApoC-II; potent activator of LCAT. Apoa-IV is a major component of HDL and chylomicrons. The protein is Apolipoprotein A-IV of Homo sapiens (Human).